A 417-amino-acid chain; its full sequence is Phosphoglycerate kinase (417 aa).

(2R)-3-phosphoglycerate is bound by residues V23, D24, F25, N26, Q39, R40, S63, H64, G66, R67, L122, R123, H170, and R171. Residue G214 coordinates ADP. G214 provides a ligand contact to CDP. AMP-binding residues include A215 and K216. Position 215 (A215) interacts with ATP. Residue A215 participates in Mg(2+) binding. Residue D219 participates in CDP binding. D219 contributes to the Mg(2+) binding site. Position 220 (K220) interacts with AMP. An ATP-binding site is contributed by K220. G238 provides a ligand contact to ADP. G238 is a CDP binding site. AMP contacts are provided by G239 and G313. 2 residues coordinate ATP: G239 and G313. CDP contacts are provided by G338 and F343. F343 is an ADP binding site. Residue E344 coordinates AMP. E344, D375, and T376 together coordinate ATP. D375 contributes to the Mg(2+) binding site.

It belongs to the phosphoglycerate kinase family. As to quaternary structure, monomer. Mg(2+) is required as a cofactor.

It is found in the cytoplasm. It localises to the mitochondrion. It carries out the reaction (2R)-3-phosphoglycerate + ATP = (2R)-3-phospho-glyceroyl phosphate + ADP. The protein operates within carbohydrate degradation; glycolysis; pyruvate from D-glyceraldehyde 3-phosphate: step 2/5. Functionally, catalyzes one of the two ATP producing reactions in the glycolytic pathway via the reversible conversion of 1,3-diphosphoglycerate to 3-phosphoglycerate. Both L- and D- forms of purine and pyrimidine nucleotides can be used as substrates, but the activity is much lower on pyrimidines. Negatively regulates the biosynthesis of acetyl-CoA from pyruvate in the mitochondrion. The protein is Phosphoglycerate kinase (PGKA) of Penicillium citrinum.